A 1405-amino-acid chain; its full sequence is DNA-directed RNA polymerase subunit beta' (1405 aa).

Positions 70, 72, 85, and 88 each coordinate Zn(2+). Mg(2+) contacts are provided by Asp460, Asp462, and Asp464. Zn(2+) contacts are provided by Cys814, Cys888, Cys895, and Cys898.

The protein belongs to the RNA polymerase beta' chain family. In terms of assembly, the RNAP catalytic core consists of 2 alpha, 1 beta, 1 beta' and 1 omega subunit. When a sigma factor is associated with the core the holoenzyme is formed, which can initiate transcription. It depends on Mg(2+) as a cofactor. The cofactor is Zn(2+).

It catalyses the reaction RNA(n) + a ribonucleoside 5'-triphosphate = RNA(n+1) + diphosphate. Its function is as follows. DNA-dependent RNA polymerase catalyzes the transcription of DNA into RNA using the four ribonucleoside triphosphates as substrates. The protein is DNA-directed RNA polymerase subunit beta' of Shewanella sediminis (strain HAW-EB3).